Reading from the N-terminus, the 95-residue chain is Aspartyl/glutamyl-tRNA(Asn/Gln) amidotransferase subunit C (95 aa).

The protein belongs to the GatC family. Heterotrimer of A, B and C subunits.

It catalyses the reaction L-glutamyl-tRNA(Gln) + L-glutamine + ATP + H2O = L-glutaminyl-tRNA(Gln) + L-glutamate + ADP + phosphate + H(+). The enzyme catalyses L-aspartyl-tRNA(Asn) + L-glutamine + ATP + H2O = L-asparaginyl-tRNA(Asn) + L-glutamate + ADP + phosphate + 2 H(+). Functionally, allows the formation of correctly charged Asn-tRNA(Asn) or Gln-tRNA(Gln) through the transamidation of misacylated Asp-tRNA(Asn) or Glu-tRNA(Gln) in organisms which lack either or both of asparaginyl-tRNA or glutaminyl-tRNA synthetases. The reaction takes place in the presence of glutamine and ATP through an activated phospho-Asp-tRNA(Asn) or phospho-Glu-tRNA(Gln). In Clostridium botulinum (strain 657 / Type Ba4), this protein is Aspartyl/glutamyl-tRNA(Asn/Gln) amidotransferase subunit C.